The chain runs to 66 residues: Ocellatin-PT1 (66 aa).

The first 22 residues, 1-22, serve as a signal peptide directing secretion; it reads MAFLKKSLFLVLFLGLVSLSIC. Positions 23–39 are excised as a propeptide; sequence DEEKRQDEDDDDDDDEE. V66 is modified (valine amide).

Expressed by the skin glands.

Its subcellular location is the secreted. In terms of biological role, has antibacterial activity against Gram-negative bacterium E.coli ATCC 25922 (MIC=300 uM) but not against S.pneumoniae ATCC 700603, S.choleraesuis ATCC 14028 or Gram-positive bacterium S.aureus ATCC 29313. Shows virtually no hemolytic activity and no cytotoxicity. In Leptodactylus pustulatus (Ceara white-lipped frog), this protein is Ocellatin-PT1.